We begin with the raw amino-acid sequence, 404 residues long: Cysteine desulfurase IscS (404 aa).

Pyridoxal 5'-phosphate-binding positions include 75–76 (AT), N155, Q183, and 203–205 (SAH). K206 is subject to N6-(pyridoxal phosphate)lysine. T243 provides a ligand contact to pyridoxal 5'-phosphate. C328 (cysteine persulfide intermediate) is an active-site residue. A [2Fe-2S] cluster-binding site is contributed by C328.

It belongs to the class-V pyridoxal-phosphate-dependent aminotransferase family. NifS/IscS subfamily. In terms of assembly, homodimer. Forms a heterotetramer with IscU, interacts with other sulfur acceptors. Pyridoxal 5'-phosphate serves as cofactor.

It is found in the cytoplasm. The enzyme catalyses (sulfur carrier)-H + L-cysteine = (sulfur carrier)-SH + L-alanine. It participates in cofactor biosynthesis; iron-sulfur cluster biosynthesis. Its function is as follows. Master enzyme that delivers sulfur to a number of partners involved in Fe-S cluster assembly, tRNA modification or cofactor biosynthesis. Catalyzes the removal of elemental sulfur atoms from cysteine to produce alanine. Functions as a sulfur delivery protein for Fe-S cluster synthesis onto IscU, an Fe-S scaffold assembly protein, as well as other S acceptor proteins. The chain is Cysteine desulfurase IscS from Pseudomonas syringae pv. syringae (strain B728a).